We begin with the raw amino-acid sequence, 796 residues long: Transcription factor kayak (796 aa).

Disordered stretches follow at residues 109 to 132 (AYQQQQSKQSYNNNNNSNSNSNTS), 315 to 341 (VVNNNNNNNNNNNNNSSNNNNNNSNTV), 374 to 429 (FNCG…GSNG), and 442 to 490 (VGSA…RNKL). Positions 402–429 (TTDTSSAATDSTSYQNGGHMFGNNGSNG) are enriched in low complexity. A compositionally biased stretch (polar residues) spans 447 to 457 (RGTSSTSNNAT). Residues 478–541 (EEKRRVRRER…HQLNFVLEAH (64 aa)) enclose the bZIP domain. Residues 480 to 499 (KRRVRRERNKLAAARCRKRR) are basic motif. The interval 506 to 534 (LSEEVDGLLKKNEDLKKEIEILTNTRHQL) is leucine-zipper. A disordered region spans residues 569 to 601 (SSGSNGSHHHNSNSNNSNNNNSNNNNNSNSNDS). S621 carries the phosphoserine modification. Disordered regions lie at residues 642-661 (PHDAGLDSSSSLDQDGPPAA) and 774-796 (SSQNKHPLELPTPTSEPSKLVSL).

It belongs to the bZIP family. Fos subfamily. Homodimer. Heterodimer with Jra. The kay-Jra heterodimer binds more stably to the AP-1 site than either of the two proteins alone.

It localises to the nucleus. Functionally, developmentally regulated transcription factor AP-1 binds and recognizes the enhancer DNA sequence: 5'-TGA[CG]TCA-3'. May play a role in the function or determination of a particular subset of cells in the developing embryo. It is able to carry out its function either independently of or in conjunction with Jra. The chain is Transcription factor kayak from Drosophila grimshawi (Hawaiian fruit fly).